Consider the following 258-residue polypeptide: Transcription factor TT2 (258 aa).

2 consecutive HTH myb-type domains span residues 11-63 (REEL…KNYL) and 64-118 (RPGI…RKRL). DNA-binding regions (H-T-H motif) lie at residues 39 to 63 (WSTLPNQAGLKRCGKSCRLRWKNYL) and 91 to 114 (WSLIAGRLPGRTDNEIKNHWNSNL). Residue 47-54 (GLKRCGKS) participates in ATP binding.

In terms of assembly, interacts with BHLH2/EGL3/MYC146, BHLH12/MYC1 and BHLH42/TT8. In terms of tissue distribution, expressed at a high level in immature siliques and at a lower level in flowers. Undetected in young seedlings, roots, leaves and inflorescence stems.

The protein localises to the nucleus. Transcription activator, when associated with BHLH2/EGL3/MYC146, BHLH12/MYC1, or BHLH42/TT8. Involved in the control of flavonoid late metabolism in developing siliques. Plays a key role in determining the tissue-specific activation of leucoanthocyanidin reductase (BANYULS). This chain is Transcription factor TT2 (TT2), found in Arabidopsis thaliana (Mouse-ear cress).